The chain runs to 63 residues: MNFNKVFIFVALILAVFAGQSQAGWLKKIGKKIERVGQHTRDATIQVIGVAQQAANVAATARG.

A signal peptide spans 1–23 (MNFNKVFIFVALILAVFAGQSQA). Arg-62 carries the arginine amide modification.

The protein belongs to the cecropin family.

The protein localises to the secreted. Functionally, sarcotoxins, which are potent bactericidal proteins, are produced in response to injury. They are cytotoxic to both Gram-positive and Gram-negative bacteria. This chain is Sarcotoxin-1B, found in Sarcophaga peregrina (Flesh fly).